The primary structure comprises 238 residues: Uridylate kinase (238 aa).

12-15 (KVSG) contacts ATP. Gly54 is a binding site for UMP. Residues Gly55 and Arg59 each coordinate ATP. Residues Asp74 and 135 to 142 (TGNPYFTT) contribute to the UMP site. ATP contacts are provided by Thr162, Asn163, Tyr168, and Asp171.

The protein belongs to the UMP kinase family. In terms of assembly, homohexamer.

Its subcellular location is the cytoplasm. It catalyses the reaction UMP + ATP = UDP + ADP. The protein operates within pyrimidine metabolism; CTP biosynthesis via de novo pathway; UDP from UMP (UMPK route): step 1/1. With respect to regulation, inhibited by UTP. Catalyzes the reversible phosphorylation of UMP to UDP. The polypeptide is Uridylate kinase (Azorhizobium caulinodans (strain ATCC 43989 / DSM 5975 / JCM 20966 / LMG 6465 / NBRC 14845 / NCIMB 13405 / ORS 571)).